The primary structure comprises 451 residues: Medium-chain fatty acid ethyl ester synthase/esterase 2 (451 aa).

A Glycyl lysine isopeptide (Lys-Gly) (interchain with G-Cter in ubiquitin) cross-link involves residue lysine 114. An AB hydrolase-1 domain is found at 166–430 (PLVVILHGLA…GGHLAYLDKD (265 aa)). Residues serine 247, aspartate 395, and histidine 423 each act as charge relay system in the active site.

It belongs to the AB hydrolase superfamily. AB hydrolase 4 family.

It carries out the reaction an aliphatic alcohol + acetyl-CoA = an acetyl ester + CoA. Its function is as follows. Displays enzymatic activity both for medium-chain fatty acid (MCFA) ethyl ester synthesis and hydrolysis (esterase activity). MCFA are toxic for yeast and this enzyme could thus be involved in their detoxification by esterification. This chain is Medium-chain fatty acid ethyl ester synthase/esterase 2 (EHT1), found in Saccharomyces cerevisiae (strain ATCC 204508 / S288c) (Baker's yeast).